A 165-amino-acid chain; its full sequence is Large ribosomal subunit protein uL10 (165 aa).

Belongs to the universal ribosomal protein uL10 family. Part of the ribosomal stalk of the 50S ribosomal subunit. The N-terminus interacts with L11 and the large rRNA to form the base of the stalk. The C-terminus forms an elongated spine to which L12 dimers bind in a sequential fashion forming a multimeric L10(L12)X complex.

Forms part of the ribosomal stalk, playing a central role in the interaction of the ribosome with GTP-bound translation factors. The sequence is that of Large ribosomal subunit protein uL10 from Shewanella halifaxensis (strain HAW-EB4).